A 525-amino-acid chain; its full sequence is D-arabinono-1,4-lactone oxidase (525 aa).

The FAD-binding PCMH-type domain maps to 20-195; that stretch reads IYSSRPEWYF…VGATVRVVPA (176 aa). At H58 the chain carries Pros-8alpha-FAD histidine.

The protein belongs to the oxygen-dependent FAD-linked oxidoreductase family. FAD is required as a cofactor.

It localises to the mitochondrion membrane. It catalyses the reaction D-arabinono-1,4-lactone + O2 = dehydro-D-arabinono-1,4-lactone + H2O2 + H(+). It participates in cofactor biosynthesis; D-erythroascorbate biosynthesis; dehydro-D-arabinono-1,4-lactone from D-arabinose: step 2/2. This chain is D-arabinono-1,4-lactone oxidase (ALO1), found in Candida glabrata (strain ATCC 2001 / BCRC 20586 / JCM 3761 / NBRC 0622 / NRRL Y-65 / CBS 138) (Yeast).